Here is a 316-residue protein sequence, read N- to C-terminus: Retinol dehydrogenase 7 (316 aa).

33–57 (FITGCDSGFGNLLARQLDRRGMRVL) provides a ligand contact to NADP(+). S163 provides a ligand contact to substrate. Residue Y175 is the Proton acceptor of the active site.

The protein belongs to the short-chain dehydrogenases/reductases (SDR) family. Highly expressed in liver. Also expressed in lung, eye, kidney, and brain.

The protein resides in the microsome. Its subcellular location is the endoplasmic reticulum. The enzyme catalyses all-trans-retinol--[retinol-binding protein] + NAD(+) = all-trans-retinal--[retinol-binding protein] + NADH + H(+). Its pathway is cofactor metabolism; retinol metabolism. In terms of biological role, acts on androgens and retinols, i.e. has steroid 3-alpha- and 17-beta-dehydrogenase and cis/trans-retinol catalytic activities. This chain is Retinol dehydrogenase 7 (Rdh7), found in Mus musculus (Mouse).